The following is a 503-amino-acid chain: Probable cytosol aminopeptidase (503 aa).

Residues Lys274 and Asp279 each contribute to the Mn(2+) site. Lys286 is an active-site residue. Mn(2+) is bound by residues Asp297, Asp356, and Glu358. Arg360 is an active-site residue.

Belongs to the peptidase M17 family. Mn(2+) serves as cofactor.

It localises to the cytoplasm. It carries out the reaction Release of an N-terminal amino acid, Xaa-|-Yaa-, in which Xaa is preferably Leu, but may be other amino acids including Pro although not Arg or Lys, and Yaa may be Pro. Amino acid amides and methyl esters are also readily hydrolyzed, but rates on arylamides are exceedingly low.. It catalyses the reaction Release of an N-terminal amino acid, preferentially leucine, but not glutamic or aspartic acids.. Functionally, presumably involved in the processing and regular turnover of intracellular proteins. Catalyzes the removal of unsubstituted N-terminal amino acids from various peptides. This is Probable cytosol aminopeptidase from Burkholderia multivorans (strain ATCC 17616 / 249).